A 186-amino-acid polypeptide reads, in one-letter code: uncharacterized protein (186 aa).

It belongs to the MG032/MG096/MG288 family.

This is an uncharacterized protein from Mycoplasma pneumoniae (strain ATCC 29342 / M129 / Subtype 1) (Mycoplasmoides pneumoniae).